Consider the following 418-residue polypeptide: Glutamyl-tRNA reductase (418 aa).

Substrate is bound by residues 49–52, serine 109, 114–116, and glutamine 120; these read TCNR and EPQ. Cysteine 50 functions as the Nucleophile in the catalytic mechanism. 189 to 194 contacts NADP(+); it reads GAGETI.

The protein belongs to the glutamyl-tRNA reductase family. In terms of assembly, homodimer.

The catalysed reaction is (S)-4-amino-5-oxopentanoate + tRNA(Glu) + NADP(+) = L-glutamyl-tRNA(Glu) + NADPH + H(+). It participates in porphyrin-containing compound metabolism; protoporphyrin-IX biosynthesis; 5-aminolevulinate from L-glutamyl-tRNA(Glu): step 1/2. Catalyzes the NADPH-dependent reduction of glutamyl-tRNA(Glu) to glutamate 1-semialdehyde (GSA). This is Glutamyl-tRNA reductase from Escherichia coli O139:H28 (strain E24377A / ETEC).